The chain runs to 375 residues: Queuine tRNA-ribosyltransferase (375 aa).

The active-site Proton acceptor is aspartate 89. Residues 89-93, aspartate 143, glutamine 187, and glycine 214 contribute to the substrate site; that span reads DSGGF. An RNA binding region spans residues 245-251; it reads GVGKPED. Aspartate 264 functions as the Nucleophile in the catalytic mechanism. The interval 269-273 is RNA binding; important for wobble base 34 recognition; sequence TRNAR. The Zn(2+) site is built by cysteine 302, cysteine 304, cysteine 307, and histidine 333.

The protein belongs to the queuine tRNA-ribosyltransferase family. Homodimer. Within each dimer, one monomer is responsible for RNA recognition and catalysis, while the other monomer binds to the replacement base PreQ1. Requires Zn(2+) as cofactor.

It carries out the reaction 7-aminomethyl-7-carbaguanine + guanosine(34) in tRNA = 7-aminomethyl-7-carbaguanosine(34) in tRNA + guanine. It functions in the pathway tRNA modification; tRNA-queuosine biosynthesis. In terms of biological role, catalyzes the base-exchange of a guanine (G) residue with the queuine precursor 7-aminomethyl-7-deazaguanine (PreQ1) at position 34 (anticodon wobble position) in tRNAs with GU(N) anticodons (tRNA-Asp, -Asn, -His and -Tyr). Catalysis occurs through a double-displacement mechanism. The nucleophile active site attacks the C1' of nucleotide 34 to detach the guanine base from the RNA, forming a covalent enzyme-RNA intermediate. The proton acceptor active site deprotonates the incoming PreQ1, allowing a nucleophilic attack on the C1' of the ribose to form the product. After dissociation, two additional enzymatic reactions on the tRNA convert PreQ1 to queuine (Q), resulting in the hypermodified nucleoside queuosine (7-(((4,5-cis-dihydroxy-2-cyclopenten-1-yl)amino)methyl)-7-deazaguanosine). The sequence is that of Queuine tRNA-ribosyltransferase from Shigella flexneri serotype 5b (strain 8401).